The sequence spans 782 residues: uncharacterized protein (782 aa).

Disordered stretches follow at residues methionine 1 to lysine 127, asparagine 205 to proline 234, and proline 308 to arginine 355. The span at lysine 24–methionine 54 shows a compositional bias: basic and acidic residues. Positions lysine 82 to lysine 118 are enriched in low complexity. Over residues alanine 312 to methionine 324 the composition is skewed to polar residues. The segment covering asparagine 326–arginine 336 has biased composition (basic and acidic residues). The span at serine 337–asparagine 346 shows a compositional bias: polar residues. Positions methionine 361 to leucine 628 form a coiled coil. The segment covering glycine 629–serine 668 has biased composition (basic and acidic residues). The tract at residues glycine 629–glycine 689 is disordered. Over residues arginine 669 to arginine 678 the composition is skewed to basic residues. A compositionally biased stretch (basic and acidic residues) spans arginine 679–glycine 689.

This is an uncharacterized protein from Yarrowia lipolytica (strain CLIB 122 / E 150) (Yeast).